The primary structure comprises 471 residues: Tryptophanase (471 aa).

N6-acetyllysine is present on residues Lys-5, Lys-115, and Lys-156. At Lys-270 the chain carries N6-(pyridoxal phosphate)lysine. Residue Lys-450 is modified to N6-acetyllysine.

It belongs to the beta-eliminating lyase family. In terms of assembly, homotetramer. Pyridoxal 5'-phosphate is required as a cofactor.

It carries out the reaction L-tryptophan + H2O = indole + pyruvate + NH4(+). It functions in the pathway amino-acid degradation; L-tryptophan degradation via pyruvate pathway; indole and pyruvate from L-tryptophan: step 1/1. This is Tryptophanase from Shigella boydii serotype 18 (strain CDC 3083-94 / BS512).